The sequence spans 97 residues: Large ribosomal subunit protein uL23 (97 aa).

Belongs to the universal ribosomal protein uL23 family. As to quaternary structure, part of the 50S ribosomal subunit. Contacts protein L29, and trigger factor when it is bound to the ribosome.

Its function is as follows. One of the early assembly proteins it binds 23S rRNA. One of the proteins that surrounds the polypeptide exit tunnel on the outside of the ribosome. Forms the main docking site for trigger factor binding to the ribosome. The protein is Large ribosomal subunit protein uL23 of Anaeromyxobacter dehalogenans (strain 2CP-1 / ATCC BAA-258).